The primary structure comprises 315 residues: Homoserine kinase (315 aa).

Position 97-107 (97-107 (PPARGLGSSAT)) interacts with ATP.

This sequence belongs to the GHMP kinase family. Homoserine kinase subfamily.

The protein resides in the cytoplasm. The catalysed reaction is L-homoserine + ATP = O-phospho-L-homoserine + ADP + H(+). It functions in the pathway amino-acid biosynthesis; L-threonine biosynthesis; L-threonine from L-aspartate: step 4/5. Catalyzes the ATP-dependent phosphorylation of L-homoserine to L-homoserine phosphate. The protein is Homoserine kinase of Synechococcus sp. (strain CC9605).